The following is a 588-amino-acid chain: 2-isopropylmalate synthase (588 aa).

Residues 40 to 314 (PRWCAVDLRD…DPQIDFSDLD (275 aa)) form the Pyruvate carboxyltransferase domain. Asp49, His253, His255, and Asn289 together coordinate Mg(2+). Positions 456–588 (APLDRVEEKW…TVREPELAAV (133 aa)) are regulatory domain.

This sequence belongs to the alpha-IPM synthase/homocitrate synthase family. LeuA type 2 subfamily. In terms of assembly, homodimer. Mg(2+) is required as a cofactor.

Its subcellular location is the cytoplasm. The catalysed reaction is 3-methyl-2-oxobutanoate + acetyl-CoA + H2O = (2S)-2-isopropylmalate + CoA + H(+). The protein operates within amino-acid biosynthesis; L-leucine biosynthesis; L-leucine from 3-methyl-2-oxobutanoate: step 1/4. Functionally, catalyzes the condensation of the acetyl group of acetyl-CoA with 3-methyl-2-oxobutanoate (2-ketoisovalerate) to form 3-carboxy-3-hydroxy-4-methylpentanoate (2-isopropylmalate). This chain is 2-isopropylmalate synthase, found in Clavibacter michiganensis subsp. michiganensis (strain NCPPB 382).